Reading from the N-terminus, the 434-residue chain is D-amino acid dehydrogenase (434 aa).

An FAD-binding site is contributed by 3–17 (VIVLGSGVIGTTTAY).

It belongs to the DadA oxidoreductase family. It depends on FAD as a cofactor.

The enzyme catalyses a D-alpha-amino acid + A + H2O = a 2-oxocarboxylate + AH2 + NH4(+). In terms of biological role, oxidative deamination of D-amino acids. The sequence is that of D-amino acid dehydrogenase from Bordetella bronchiseptica (strain ATCC BAA-588 / NCTC 13252 / RB50) (Alcaligenes bronchisepticus).